The following is a 386-amino-acid chain: Cytochrome b (386 aa).

The next 4 helical transmembrane spans lie at 32 to 52, 76 to 98, 113 to 133, and 179 to 199; these read LGSL…FLAM, WFIR…IHIG, VWNV…LGYC, and FFAF…MHFM. Residues His82 and His96 each contribute to the heme b site. Heme b-binding residues include His183 and His197. His202 is an a ubiquinone binding site. Transmembrane regions (helical) follow at residues 225–245, 289–309, 321–341, and 348–368; these read FIFK…LFVF, LLGV…PITD, FSKF…HLGE, and FVVM…VIVP.

Belongs to the cytochrome b family. In terms of assembly, fungal cytochrome b-c1 complex contains 10 subunits; 3 respiratory subunits, 2 core proteins and 5 low-molecular weight proteins. Cytochrome b-c1 complex is a homodimer. Requires heme b as cofactor.

The protein resides in the mitochondrion inner membrane. Its function is as follows. Component of the ubiquinol-cytochrome c reductase complex (complex III or cytochrome b-c1 complex) that is part of the mitochondrial respiratory chain. The b-c1 complex mediates electron transfer from ubiquinol to cytochrome c. Contributes to the generation of a proton gradient across the mitochondrial membrane that is then used for ATP synthesis. This Kluyveromyces lactis (strain ATCC 8585 / CBS 2359 / DSM 70799 / NBRC 1267 / NRRL Y-1140 / WM37) (Yeast) protein is Cytochrome b (COB).